The following is a 475-amino-acid chain: 3-isopropylmalate dehydratase large subunit (475 aa).

[4Fe-4S] cluster contacts are provided by cysteine 349, cysteine 409, and cysteine 412.

This sequence belongs to the aconitase/IPM isomerase family. LeuC type 1 subfamily. As to quaternary structure, heterodimer of LeuC and LeuD. [4Fe-4S] cluster serves as cofactor.

The catalysed reaction is (2R,3S)-3-isopropylmalate = (2S)-2-isopropylmalate. The protein operates within amino-acid biosynthesis; L-leucine biosynthesis; L-leucine from 3-methyl-2-oxobutanoate: step 2/4. Its function is as follows. Catalyzes the isomerization between 2-isopropylmalate and 3-isopropylmalate, via the formation of 2-isopropylmaleate. This is 3-isopropylmalate dehydratase large subunit from Cereibacter sphaeroides (strain KD131 / KCTC 12085) (Rhodobacter sphaeroides).